The chain runs to 89 residues: Defensin-like protein 108 (89 aa).

A signal peptide spans 1 to 20 (MTSLIAFLFTVLVIVSSVHC). Cystine bridges form between C39–C81, C49–C71, C57–C79, and C61–C80.

This sequence belongs to the DEFL family.

The protein resides in the secreted. This Arabidopsis thaliana (Mouse-ear cress) protein is Defensin-like protein 108 (LCR51).